We begin with the raw amino-acid sequence, 74 residues long: Sec-independent protein translocase protein TatA (74 aa).

A helical transmembrane segment spans residues 1-21 (MGTFSIWHWLIVLLVVVVVFG). The disordered stretch occupies residues 50 to 74 (TAPAGQVANQSTADQTIDVQTKPKG). The segment covering 56 to 68 (VANQSTADQTIDV) has biased composition (polar residues).

Belongs to the TatA/E family. As to quaternary structure, the Tat system comprises two distinct complexes: a TatABC complex, containing multiple copies of TatA, TatB and TatC subunits, and a separate TatA complex, containing only TatA subunits. Substrates initially bind to the TatABC complex, which probably triggers association of the separate TatA complex to form the active translocon.

The protein resides in the cell inner membrane. Functionally, part of the twin-arginine translocation (Tat) system that transports large folded proteins containing a characteristic twin-arginine motif in their signal peptide across membranes. TatA could form the protein-conducting channel of the Tat system. The protein is Sec-independent protein translocase protein TatA of Verminephrobacter eiseniae (strain EF01-2).